The sequence spans 127 residues: Sulfiredoxin (127 aa).

Belongs to the sulfiredoxin family. The cofactor is Mg(2+). Post-translationally, forms a transient disulfide bond with TSA1 during the reduction of cysteine sulfinic acid (-SO2H).

It is found in the cytoplasm. Its subcellular location is the nucleus. The catalysed reaction is S-hydroxy-S-oxy-L-cysteinyl-[peroxiredoxin] + [protein]-dithiol + ATP = S-hydroxy-L-cysteinyl-[peroxiredoxin] + [protein]-disulfide + ADP + phosphate. Contributes to oxidative stress resistance by reducing cysteine-sulfinic acid formed under exposure to oxidants in the peroxiredoxin TSA1. May catalyze the reduction in a multi-step process by acting both as a specific phosphotransferase and as thioltransferase. The chain is Sulfiredoxin from Saccharomyces cerevisiae (strain ATCC 204508 / S288c) (Baker's yeast).